We begin with the raw amino-acid sequence, 68 residues long: uncharacterized protein (68 aa).

This sequence to bacterial proteins yidD.

This is an uncharacterized protein from Haemophilus influenzae (Bacteriophage HP1).